The primary structure comprises 64 residues: Alpha-conotoxin CnIL (64 aa).

A signal peptide spans 1–21; the sequence is MGMRMMFTVFLLVVLTTTVVS. Residues 22 to 49 constitute a propeptide that is removed on maturation; sequence FPSDSASDGRDDEAKDERSDIYESKRDG. Intrachain disulfides connect Cys-51–Cys-56 and Cys-52–Cys-62. A Cysteine amide modification is found at Cys-62.

Belongs to the conotoxin A superfamily. Expressed by the venom duct.

Its subcellular location is the secreted. This is Alpha-conotoxin CnIL from Conus consors (Singed cone).